The chain runs to 276 residues: Transmembrane protein 53 (276 aa).

The chain crosses the membrane as a helical span at residues 170-190 (LLLLAAFALVVILFHFLLAPF).

It belongs to the TMEM53 family. As to expression, expressed in liver (at protein level).

It is found in the nucleus outer membrane. Functionally, negatively regulates bone morphogenetic protein (BMP) signaling in osteoblast lineage cells by blocking cytoplasm-nucleus translocation of phosphorylated SMAD1/5/9 proteins. This Mus musculus (Mouse) protein is Transmembrane protein 53 (Tmem53).